Reading from the N-terminus, the 330-residue chain is Aspartate--ammonia ligase (330 aa).

It belongs to the class-II aminoacyl-tRNA synthetase family. AsnA subfamily.

The protein resides in the cytoplasm. The enzyme catalyses L-aspartate + NH4(+) + ATP = L-asparagine + AMP + diphosphate + H(+). It participates in amino-acid biosynthesis; L-asparagine biosynthesis; L-asparagine from L-aspartate (ammonia route): step 1/1. The protein is Aspartate--ammonia ligase of Shigella dysenteriae serotype 1 (strain Sd197).